Consider the following 367-residue polypeptide: MDDKKNAPSSDKSKALAAALAQIEKQFGKGSVMRMEDGAVVEEVQVVSTGSLGLDLALGVGGLPRGRVVEIYGPESSGKTTLTLQTIAEMQKLGGTCAFIDAEHALDVTYAQKLGINLSELLISQPDTGEQALEICDALVRSGGVDLIVIDSVAALTPRAEIEGDMGDSLPGLQARLMSQALRKLTGSINRTNTLVIFINQIRMKIGVMFGNPETTTGGNALKFYASVRLDIRRTGSIKSGDEVIGNETKVKVVKNKIAPPFKEAHFEILYGEGTSREGEILDLGSDAKIVEKSGAWYSYNGERIGQGKDNARNYLKERPELAREIENKVRASLGVPELGAIKSDEPVAKKASAKESKEAKELKEVE.

73–80 (GPESSGKT) provides a ligand contact to ATP. The tract at residues 345–367 (DEPVAKKASAKESKEAKELKEVE) is disordered.

This sequence belongs to the RecA family.

It localises to the cytoplasm. Its function is as follows. Can catalyze the hydrolysis of ATP in the presence of single-stranded DNA, the ATP-dependent uptake of single-stranded DNA by duplex DNA, and the ATP-dependent hybridization of homologous single-stranded DNAs. It interacts with LexA causing its activation and leading to its autocatalytic cleavage. The chain is Protein RecA from Herminiimonas arsenicoxydans.